The sequence spans 85 residues: Putative membrane protein insertion efficiency factor (85 aa).

The segment at P66–H85 is disordered.

This sequence belongs to the UPF0161 family.

The protein localises to the cell inner membrane. Functionally, could be involved in insertion of integral membrane proteins into the membrane. The sequence is that of Putative membrane protein insertion efficiency factor from Yersinia pestis bv. Antiqua (strain Antiqua).